We begin with the raw amino-acid sequence, 229 residues long: Imidazoleglycerol-phosphate dehydratase (229 aa).

Belongs to the imidazoleglycerol-phosphate dehydratase family.

It catalyses the reaction D-erythro-1-(imidazol-4-yl)glycerol 3-phosphate = 3-(imidazol-4-yl)-2-oxopropyl phosphate + H2O. The protein operates within amino-acid biosynthesis; L-histidine biosynthesis; L-histidine from 5-phospho-alpha-D-ribose 1-diphosphate: step 6/9. The sequence is that of Imidazoleglycerol-phosphate dehydratase from Neurospora crassa (strain ATCC 24698 / 74-OR23-1A / CBS 708.71 / DSM 1257 / FGSC 987).